Consider the following 473-residue polypeptide: MAVKSYQAGVTQYRQSYWQPDYMPLDTDILACFKITPQPGVDREEAAAAVAAESSCGTWTTVWTDLLTDLDYYKGRAYRLEDVPGDDTCYYAFIAYPIDLFEEGSVVNVFTSLVGNVFGFKAVRALRLEDLRFPIAYVKTCGGPPHGIQVERDKLNKYGRPLLGCTIKPKLGLSAKNYGRACYEALRGGLDFTKDDENINSQPFMRWRDRFDFVMEAVQKAEQETGERKGHYLNVTAPTPEEMYKRAEYAKEIRAPIIMHDYLAGGLCANAGLANWCRNNGMLLHIHRAMHAVIDRNPHHGIHFRVLTKILRLSGGDHLHTGTVVGKLEGDRASTLGWIDLLRESFVPEDRSRGIFFDQDWGSMPGGFAVASGGIHVWHMPALVTIFGDDSVLQFGGGTLGHPWGNAAGAHANRVALEACVQARGEGRHLEKEGKDILTAAAAHSPELKIAMETWKEIKFEFETMDKLAIANK.

Substrate-binding residues include N116 and T166. The active-site Proton acceptor is K168. Substrate is bound at residue K170. The Mg(2+) site is built by K194, D196, and E197. An N6-carboxylysine modification is found at K194. The active-site Proton acceptor is H287. The substrate site is built by R288, H320, and S372.

It belongs to the RuBisCO large chain family. Type I subfamily. In terms of assembly, heterohexadecamer of 8 large chains and 8 small chains. Mg(2+) is required as a cofactor.

It catalyses the reaction 2 (2R)-3-phosphoglycerate + 2 H(+) = D-ribulose 1,5-bisphosphate + CO2 + H2O. The catalysed reaction is D-ribulose 1,5-bisphosphate + O2 = 2-phosphoglycolate + (2R)-3-phosphoglycerate + 2 H(+). Functionally, ruBisCO catalyzes two reactions: the carboxylation of D-ribulose 1,5-bisphosphate, the primary event in carbon dioxide fixation, as well as the oxidative fragmentation of the pentose substrate. Both reactions occur simultaneously and in competition at the same active site. This Nitrobacter winogradskyi (strain ATCC 25391 / DSM 10237 / CIP 104748 / NCIMB 11846 / Nb-255) protein is Ribulose bisphosphate carboxylase large chain 1.